A 153-amino-acid polypeptide reads, in one-letter code: Peptide deformylase (153 aa).

Residues C87 and H129 each coordinate Fe cation. The active site involves E130. H133 lines the Fe cation pocket.

The protein belongs to the polypeptide deformylase family. It depends on Fe(2+) as a cofactor.

It carries out the reaction N-terminal N-formyl-L-methionyl-[peptide] + H2O = N-terminal L-methionyl-[peptide] + formate. Functionally, removes the formyl group from the N-terminal Met of newly synthesized proteins. Requires at least a dipeptide for an efficient rate of reaction. N-terminal L-methionine is a prerequisite for activity but the enzyme has broad specificity at other positions. The protein is Peptide deformylase of Dictyoglomus turgidum (strain DSM 6724 / Z-1310).